We begin with the raw amino-acid sequence, 76 residues long: MKLTCVMIVAVLFLTANTFATADDPRNGLRDLFSIAHHEMKNPEASKLNEKCYGFGEACLVLYTDCCGYCVLAVCL.

An N-terminal signal peptide occupies residues 1–22 (MKLTCVMIVAVLFLTANTFATA). Positions 23 to 50 (DDPRNGLRDLFSIAHHEMKNPEASKLNE) are excised as a propeptide. 3 cysteine pairs are disulfide-bonded: Cys52–Cys66, Cys59–Cys70, and Cys67–Cys75.

Belongs to the conotoxin O1 superfamily. As to expression, expressed by the venom duct.

The protein resides in the secreted. In Conus victoriae (Queen Victoria cone), this protein is Conotoxin Vc6.3.